Consider the following 260-residue polypeptide: Coiled-coil domain-containing protein 172 (260 aa).

Residues Ser-13–Cys-194 adopt a coiled-coil conformation.

Belongs to the CCDC172 family. As to quaternary structure, may interact with TEKT2.

It is found in the cytoplasm. The protein localises to the cell projection. Its subcellular location is the cilium. The protein is Coiled-coil domain-containing protein 172 (CCDC172) of Bos taurus (Bovine).